The chain runs to 415 residues: Phosphoribosylamine--glycine ligase (415 aa).

An ATP-grasp domain is found at 108–311; that stretch reads KKIMKKYNIP…LMQHIIDLDE (204 aa). 134–191 contacts ATP; the sequence is IENCELPVVVKKDGLAAGKGVIIADTIEAARSAIEIMYGDEEEGTVVFETFLEGEEFS. Mg(2+) is bound by residues Glu281 and Asn283.

Belongs to the GARS family. Mg(2+) serves as cofactor. It depends on Mn(2+) as a cofactor.

It carries out the reaction 5-phospho-beta-D-ribosylamine + glycine + ATP = N(1)-(5-phospho-beta-D-ribosyl)glycinamide + ADP + phosphate + H(+). It participates in purine metabolism; IMP biosynthesis via de novo pathway; N(1)-(5-phospho-D-ribosyl)glycinamide from 5-phospho-alpha-D-ribose 1-diphosphate: step 2/2. The sequence is that of Phosphoribosylamine--glycine ligase from Staphylococcus aureus (strain Mu50 / ATCC 700699).